Consider the following 179-residue polypeptide: NADH:FAD oxidoreductase (179 aa).

48-51 (TCSA) lines the FAD pocket. 54–57 (SVCD) lines the NAD(+) pocket. FAD-binding positions include 65–71 (CINRKSY), Ala-99, 104–109 (VPMEER), and Ser-144. NAD(+) is bound by residues His-145 and 166–169 (YHRR). Tyr-166 contacts FAD.

It belongs to the non-flavoprotein flavin reductase family. As to quaternary structure, homodimer. The chlorophenol-4-monooxygenase is composed of an oxygenase component TftD and a reductase component TftC.

It carries out the reaction FADH2 + NAD(+) = FAD + NADH + 2 H(+). It functions in the pathway xenobiotic degradation. Reductase component of a two-component system that degrades 2,4,5-trichlorophenol. TftC provides the FADH(2) required by TftD. TftD oxidizes 2,4,5-trichlorophenol (2,4,5-TCP) to 2,5-dichloro-p-benzoquinone, which is chemically reduced to 2,5-dichloro-p-hydroquinone (2,5-DiCHQ). Then, TftD oxidizes the latter to 5-chloro-2-hydroxy-p-benzoquinone. The sequence is that of NADH:FAD oxidoreductase (tftC) from Burkholderia cepacia (Pseudomonas cepacia).